The chain runs to 917 residues: Protein translocase subunit SecA (917 aa).

ATP-binding positions include glutamine 87, 105–109 (GEGKT), and aspartate 516. Cysteine 901, cysteine 903, cysteine 912, and histidine 913 together coordinate Zn(2+).

This sequence belongs to the SecA family. Monomer and homodimer. Part of the essential Sec protein translocation apparatus which comprises SecA, SecYEG and auxiliary proteins SecDF-YajC and YidC. The cofactor is Zn(2+).

The protein resides in the cell inner membrane. The protein localises to the cytoplasm. It catalyses the reaction ATP + H2O + cellular proteinSide 1 = ADP + phosphate + cellular proteinSide 2.. Functionally, part of the Sec protein translocase complex. Interacts with the SecYEG preprotein conducting channel. Has a central role in coupling the hydrolysis of ATP to the transfer of proteins into and across the cell membrane, serving both as a receptor for the preprotein-SecB complex and as an ATP-driven molecular motor driving the stepwise translocation of polypeptide chains across the membrane. The sequence is that of Protein translocase subunit SecA from Acidovorax ebreus (strain TPSY) (Diaphorobacter sp. (strain TPSY)).